The chain runs to 463 residues: Tryptophan aminotransferase-related protein 4 (463 aa).

Residues 6–26 traverse the membrane as a helical segment; sequence LLLIVSIILNLVFTIHILYYS. Residues Tyr124, 163 to 164, Asn239, 259 to 262, 282 to 285, and Arg293 contribute to the pyridoxal 5'-phosphate site; these read TT, DYAY, and SLSK. Lys285 is modified (N6-(pyridoxal phosphate)lysine).

This sequence belongs to the alliinase family. The cofactor is pyridoxal 5'-phosphate.

The protein resides in the membrane. Probable aminotransferase. The sequence is that of Tryptophan aminotransferase-related protein 4 (TAR4) from Arabidopsis thaliana (Mouse-ear cress).